The chain runs to 300 residues: MANCEFSPVSGDKPCCRLSRRAQLCLGVSILVLILVVVLAVVVPRWRQQWSGPGTTKRFPETVLARCVKYTEIHPEMRHVDCQSVWDAFKGAFISKHPCNITEEDYQPLMKLGTQTVPCNKILLWSRIKDLAHQFTQVQRDMFTLEDTLLGYLADDLTWCGEFNTSKINYQSCPDWRKDCSNNPVSVFWKTVSRRFAEAACDVVHVMLNGSRSKIFDKNSTFGSVEVHNLQPEKVQTLEAWVIHGGREDSRDLCQDPTIKELESIISKRNIQFSCKNIYRPDKFLQCVKNPEDSSCTSEI.

Over 1–21 the chain is Cytoplasmic; that stretch reads MANCEFSPVSGDKPCCRLSRR. The chain crosses the membrane as a helical; Signal-anchor for type II membrane protein span at residues 22–42; it reads AQLCLGVSILVLILVVVLAVV. Residues 43-300 lie on the Extracellular side of the membrane; it reads VPRWRQQWSG…PEDSSCTSEI (258 aa). 3 disulfide bridges follow: Cys67/Cys82, Cys99/Cys180, and Cys160/Cys173. Asn100 carries N-linked (GlcNAc...) asparagine glycosylation. Cys119 is an active-site residue. A glycan (N-linked (GlcNAc...) asparagine) is linked at Asn164. The active site involves Cys201. 2 N-linked (GlcNAc...) asparagine glycosylation sites follow: Asn209 and Asn219. Intrachain disulfides connect Cys254–Cys275 and Cys287–Cys296.

It belongs to the ADP-ribosyl cyclase family. In terms of assembly, homodimer. As to expression, expressed at high levels in pancreas, liver, kidney, brain, testis, ovary, placenta, malignant lymphoma and neuroblastoma.

Its subcellular location is the cell surface. The protein resides in the membrane. It carries out the reaction 2'-phospho-cyclic ADP-ribose + nicotinate = nicotinate-adenine dinucleotide phosphate. The enzyme catalyses NAD(+) = cyclic ADP-beta-D-ribose + nicotinamide + H(+). The catalysed reaction is NAD(+) + H2O = ADP-D-ribose + nicotinamide + H(+). It catalyses the reaction cyclic ADP-beta-D-ribose + H2O = ADP-D-ribose. It carries out the reaction NADP(+) = 2'-phospho-cyclic ADP-ribose + nicotinamide. The enzyme catalyses nicotinate + NADP(+) = nicotinate-adenine dinucleotide phosphate + nicotinamide. ATP inhibits the cADPR hydrolyzing activity. Its function is as follows. Synthesizes cyclic ADP-ribose (cADPR), a second messenger for glucose-induced insulin secretion. Synthesizes the Ca(2+) mobilizer nicotinate-adenine dinucleotide phosphate, NAADP(+), from 2'-phospho-cADPR and nicotinic acid, as well as from NADP(+) and nicotinic acid. At both pH 5.0 and pH 7.4 preferentially transforms 2'-phospho-cADPR into NAADP(+), while preferentially cleaving NADP(+) to cADPR and ADPRP rather than into NADDP(+). Has cADPR hydrolase activity. This chain is ADP-ribosyl cyclase/cyclic ADP-ribose hydrolase 1 (CD38), found in Homo sapiens (Human).